The following is a 397-amino-acid chain: Na(+)/H(+) antiporter NhaA 2 (397 aa).

The next 11 membrane-spanning stretches (helical) occupy residues 9 to 29 (LHNPAASGILIFLAAVAAMAV), 59 to 79 (LLLWINDGLMAVFFLLVGLEL), 95 to 115 (ILPVVGAVGGIALPAAIYTLI), 125 to 145 (GWAIPTATDIAFALGILALLG), 154 to 174 (LFLLTLAIIDDLAAILIIAFF), 177 to 197 (SELSPASLMIAGSAIGTLILM), 222 to 242 (SGVHATLAGVVLGFVIPLKGE), 260 to 280 (VVGLGILPLFAFANAGVSLQG), 292 to 312 (LGIALGLFLGKQIGVFGFVWL), 332 to 352 (GVALLCGVGFTMSLFISSLAF), and 371 to 391 (LGILTGSILSGIFGYILLRFS).

It belongs to the NhaA Na(+)/H(+) (TC 2.A.33) antiporter family.

The protein resides in the cell inner membrane. The catalysed reaction is Na(+)(in) + 2 H(+)(out) = Na(+)(out) + 2 H(+)(in). Functionally, na(+)/H(+) antiporter that extrudes sodium in exchange for external protons. The chain is Na(+)/H(+) antiporter NhaA 2 from Magnetococcus marinus (strain ATCC BAA-1437 / JCM 17883 / MC-1).